We begin with the raw amino-acid sequence, 853 residues long: Translation initiation factor IF-2 (853 aa).

2 disordered regions span residues 1–68 (MSDT…ASDG) and 94–265 (LEQR…DKTS). Positions 20–32 (RKTSGTVKQSFSH) are enriched in polar residues. A compositionally biased stretch (basic and acidic residues) spans 94 to 161 (LEQRKAEEAS…ASREAVERPS (68 aa)). The segment covering 163-176 (APRAAPAAQTPPAA) has biased composition (low complexity). 2 stretches are compositionally biased toward basic and acidic residues: residues 196 to 219 (PARD…DAER) and 245 to 265 (RARE…DKTS). Residues 347–515 (PRAPIVTIMG…AISIQAEILE (169 aa)) form the tr-type G domain. A G1 region spans residues 356 to 363 (GHVDHGKT). 356 to 363 (GHVDHGKT) contacts GTP. Positions 381-385 (GITQH) are G2. The G3 stretch occupies residues 403–406 (DTPG). GTP-binding positions include 403-407 (DTPGH) and 457-460 (TKSD). Residues 457 to 460 (TKSD) are G4. A G5 region spans residues 493–495 (SAK).

It belongs to the TRAFAC class translation factor GTPase superfamily. Classic translation factor GTPase family. IF-2 subfamily.

The protein localises to the cytoplasm. Functionally, one of the essential components for the initiation of protein synthesis. Protects formylmethionyl-tRNA from spontaneous hydrolysis and promotes its binding to the 30S ribosomal subunits. Also involved in the hydrolysis of GTP during the formation of the 70S ribosomal complex. This is Translation initiation factor IF-2 from Hyphomonas neptunium (strain ATCC 15444).